Reading from the N-terminus, the 294-residue chain is 4-hydroxy-tetrahydrodipicolinate synthase (294 aa).

Residue threonine 45 participates in pyruvate binding. Tyrosine 133 (proton donor/acceptor) is an active-site residue. Lysine 161 functions as the Schiff-base intermediate with substrate in the catalytic mechanism. Isoleucine 203 lines the pyruvate pocket.

Belongs to the DapA family. Homotetramer; dimer of dimers.

Its subcellular location is the cytoplasm. The catalysed reaction is L-aspartate 4-semialdehyde + pyruvate = (2S,4S)-4-hydroxy-2,3,4,5-tetrahydrodipicolinate + H2O + H(+). It functions in the pathway amino-acid biosynthesis; L-lysine biosynthesis via DAP pathway; (S)-tetrahydrodipicolinate from L-aspartate: step 3/4. Its function is as follows. Catalyzes the condensation of (S)-aspartate-beta-semialdehyde [(S)-ASA] and pyruvate to 4-hydroxy-tetrahydrodipicolinate (HTPA). The polypeptide is 4-hydroxy-tetrahydrodipicolinate synthase (Shewanella sp. (strain W3-18-1)).